Here is a 763-residue protein sequence, read N- to C-terminus: 5-methyltetrahydropteroyltriglutamate--homocysteine methyltransferase (763 aa).

5-methyltetrahydropteroyltri-L-glutamate-binding positions include 16–19 (RELK) and K117. L-homocysteine contacts are provided by residues 440–442 (IGS) and E493. L-methionine is bound by residues 440–442 (IGS) and E493. Residues 524 to 525 (RC) and W570 contribute to the 5-methyltetrahydropteroyltri-L-glutamate site. An L-homocysteine-binding site is contributed by D608. D608 contributes to the L-methionine binding site. E614 contributes to the 5-methyltetrahydropteroyltri-L-glutamate binding site. 3 residues coordinate Zn(2+): H650, C652, and E674. Residue H703 is the Proton donor of the active site. C735 is a binding site for Zn(2+).

It belongs to the vitamin-B12 independent methionine synthase family. Requires Zn(2+) as cofactor.

The enzyme catalyses 5-methyltetrahydropteroyltri-L-glutamate + L-homocysteine = tetrahydropteroyltri-L-glutamate + L-methionine. The protein operates within amino-acid biosynthesis; L-methionine biosynthesis via de novo pathway; L-methionine from L-homocysteine (MetE route): step 1/1. Catalyzes the transfer of a methyl group from 5-methyltetrahydrofolate to homocysteine resulting in methionine formation. In Alcanivorax borkumensis (strain ATCC 700651 / DSM 11573 / NCIMB 13689 / SK2), this protein is 5-methyltetrahydropteroyltriglutamate--homocysteine methyltransferase.